Reading from the N-terminus, the 320-residue chain is 3-oxoacyl-[acyl-carrier-protein] reductase 1, chloroplastic (320 aa).

The transit peptide at 1–60 directs the protein to the chloroplast; the sequence is MATTVAATKLTSLKAVKKLGFREIRQVRQWSPLQSAMPHFGMLRCGSRQSFATSTVVKAQ. 82 to 106 serves as a coordination point for NADP(+); that stretch reads VTGASRGIGKAIALSLGKAGCKVLV. S214 provides a ligand contact to substrate. Y227 functions as the Proton acceptor in the catalytic mechanism.

The protein belongs to the short-chain dehydrogenases/reductases (SDR) family. As to quaternary structure, homotetramer.

It is found in the plastid. It localises to the chloroplast. It carries out the reaction a (3R)-hydroxyacyl-[ACP] + NADP(+) = a 3-oxoacyl-[ACP] + NADPH + H(+). Its pathway is lipid metabolism; fatty acid biosynthesis. In Brassica napus (Rape), this protein is 3-oxoacyl-[acyl-carrier-protein] reductase 1, chloroplastic (gbkr1).